The sequence spans 124 residues: MGFLTPKSFGEQAEDFACKMMKKKGYHILQRNARSRYGELDIIALHGEVVVFCEVKARQGAVSGSAGEAIDGRKQRQLGRLAEAWRLANPAWMAAPCRFDAVLVAREAQGWHAEIVQDAFQLGW.

Belongs to the UPF0102 family.

The chain is UPF0102 protein Mmc1_3298 from Magnetococcus marinus (strain ATCC BAA-1437 / JCM 17883 / MC-1).